We begin with the raw amino-acid sequence, 347 residues long: Dihydroorotase (347 aa).

Residues His-17 and His-19 each contribute to the Zn(2+) site. Substrate contacts are provided by residues 19–21 (HVR) and Asn-45. Residues Lys-102, His-139, and His-177 each contribute to the Zn(2+) site. The residue at position 102 (Lys-102) is an N6-carboxylysine. Substrate is bound at residue His-139. Leu-222 serves as a coordination point for substrate. Asp-250 is a binding site for Zn(2+). Asp-250 is an active-site residue. Residues His-254 and Ala-266 each coordinate substrate.

Belongs to the metallo-dependent hydrolases superfamily. DHOase family. Class II DHOase subfamily. As to quaternary structure, homodimer. The cofactor is Zn(2+).

The enzyme catalyses (S)-dihydroorotate + H2O = N-carbamoyl-L-aspartate + H(+). Its pathway is pyrimidine metabolism; UMP biosynthesis via de novo pathway; (S)-dihydroorotate from bicarbonate: step 3/3. Catalyzes the reversible cyclization of carbamoyl aspartate to dihydroorotate. In Acidovorax sp. (strain JS42), this protein is Dihydroorotase.